A 216-amino-acid polypeptide reads, in one-letter code: Somatotropin (216 aa).

The signal sequence occupies residues Met1–Ala26. His45 lines the Zn(2+) pocket. Cys78 and Cys189 form a disulfide bridge. A Phosphoserine modification is found at Ser131. Glu198 contacts Zn(2+). A disulfide bond links Cys206 and Cys214.

It belongs to the somatotropin/prolactin family.

Its subcellular location is the secreted. Plays an important role in growth control. Its major role in stimulating body growth is to stimulate the liver and other tissues to secrete IGF1. It stimulates both the differentiation and proliferation of myoblasts. It also stimulates amino acid uptake and protein synthesis in muscle and other tissues. The chain is Somatotropin (GH1) from Equus caballus (Horse).